Reading from the N-terminus, the 446-residue chain is Glucose-1-phosphate adenylyltransferase (446 aa).

Residues Y119, G184, 199 to 200 (EK), and S217 contribute to the alpha-D-glucose 1-phosphate site.

It belongs to the bacterial/plant glucose-1-phosphate adenylyltransferase family. In terms of assembly, homotetramer.

The enzyme catalyses alpha-D-glucose 1-phosphate + ATP + H(+) = ADP-alpha-D-glucose + diphosphate. It functions in the pathway glycan biosynthesis; glycogen biosynthesis. In terms of biological role, involved in the biosynthesis of ADP-glucose, a building block required for the elongation reactions to produce glycogen. Catalyzes the reaction between ATP and alpha-D-glucose 1-phosphate (G1P) to produce pyrophosphate and ADP-Glc. This chain is Glucose-1-phosphate adenylyltransferase, found in Rhodopirellula baltica (strain DSM 10527 / NCIMB 13988 / SH1).